Here is a 120-residue protein sequence, read N- to C-terminus: Ribosome-binding factor A (120 aa).

The protein belongs to the RbfA family. As to quaternary structure, monomer. Binds 30S ribosomal subunits, but not 50S ribosomal subunits or 70S ribosomes.

The protein localises to the cytoplasm. Functionally, one of several proteins that assist in the late maturation steps of the functional core of the 30S ribosomal subunit. Associates with free 30S ribosomal subunits (but not with 30S subunits that are part of 70S ribosomes or polysomes). Required for efficient processing of 16S rRNA. May interact with the 5'-terminal helix region of 16S rRNA. This chain is Ribosome-binding factor A, found in Clostridium botulinum (strain Okra / Type B1).